Here is a 156-residue protein sequence, read N- to C-terminus: MKCPYCGETEDKVIDSRQGKEADVIRRRRECLSCSRRFTTYEKVEDMPLVIIKKDGRREVFNGEKVRAGMLRACEKRNISVHVIDEFIEQLERDLRETGEKEVPSHQVGEAIMNKLHELDDVAYVRFASVYREFKHVNDFISELKYLLKQQQKGGK.

A zinc finger lies at Cys-3–Cys-34. An ATP-cone domain is found at Leu-49–Asp-139.

The protein belongs to the NrdR family. Zn(2+) serves as cofactor.

Negatively regulates transcription of bacterial ribonucleotide reductase nrd genes and operons by binding to NrdR-boxes. This chain is Transcriptional repressor NrdR, found in Desulfatibacillum aliphaticivorans.